The sequence spans 128 residues: UPF0292 protein MJ1624 (128 aa).

The region spanning 23–105 (EKPIIVEGKR…KVNTKIRHEI (83 aa)) is the Toprim domain. Mg(2+)-binding residues include E29, D74, and D76.

The protein belongs to the UPF0292 family. The cofactor is Mg(2+).

The protein is UPF0292 protein MJ1624 of Methanocaldococcus jannaschii (strain ATCC 43067 / DSM 2661 / JAL-1 / JCM 10045 / NBRC 100440) (Methanococcus jannaschii).